The sequence spans 310 residues: Olfactory receptor 8G3 (310 aa).

Residues 1 to 25 are Extracellular-facing; that stretch reads MDPGNHSSVTESILAGLSEQPELQL. Asn-5 is a glycosylation site (N-linked (GlcNAc...) asparagine). Residues 26 to 46 traverse the membrane as a helical segment; sequence RLFLLFLGICVVTVVGNLGMI. Topologically, residues 47–54 are cytoplasmic; the sequence is TLIGLSSH. The helical transmembrane segment at 55-75 threads the bilayer; sequence LHTPMYYFLSSLSFIDFCHST. Residues 76 to 99 are Extracellular-facing; sequence VITPKMLVNFATEKNIISYPECMA. Cys-97 and Cys-189 form a disulfide bridge. The chain crosses the membrane as a helical span at residues 100–120; the sequence is QLYLFSIFAIAECHMLAAMAY. Over 121–139 the chain is Cytoplasmic; the sequence is DCYVAICSPLLYNVIMSYH. Residues 140-160 traverse the membrane as a helical segment; it reads HCFWLTVGVYILGILGSTIHT. Topologically, residues 161–197 are extracellular; that stretch reads SFMLRLFLCKTNVINHYFCDLFPLLGLSCSSTYINEL. Residues 198–217 traverse the membrane as a helical segment; the sequence is LVLVLSAFNILMPALTILAS. Over 218–237 the chain is Cytoplasmic; the sequence is YIFIIASILRIHSTEGRSKA. The helical transmembrane segment at 238-258 threads the bilayer; the sequence is FSTCSSHILAVAVFFGSAAFM. Residues 259–271 are Extracellular-facing; sequence YLQPSSVSSMDQR. Residues 272–292 form a helical membrane-spanning segment; the sequence is KVSSVFYTTIVPMLNPLIYSL. Over 293–310 the chain is Cytoplasmic; the sequence is RNKDVKLAVKKILHQTAC.

This sequence belongs to the G-protein coupled receptor 1 family.

The protein localises to the cell membrane. Functionally, odorant receptor. The polypeptide is Olfactory receptor 8G3 (Homo sapiens (Human)).